The chain runs to 100 residues: NAD(P)H-quinone oxidoreductase subunit 4L, chloroplastic (100 aa).

A run of 3 helical transmembrane segments spans residues 1–21 (MLEH…YGLI), 31–51 (MCLE…SDFF), and 60–80 (IFSI…PAIL).

This sequence belongs to the complex I subunit 4L family. In terms of assembly, NDH is composed of at least 16 different subunits, 5 of which are encoded in the nucleus.

It is found in the plastid. The protein resides in the chloroplast thylakoid membrane. The enzyme catalyses a plastoquinone + NADH + (n+1) H(+)(in) = a plastoquinol + NAD(+) + n H(+)(out). The catalysed reaction is a plastoquinone + NADPH + (n+1) H(+)(in) = a plastoquinol + NADP(+) + n H(+)(out). NDH shuttles electrons from NAD(P)H:plastoquinone, via FMN and iron-sulfur (Fe-S) centers, to quinones in the photosynthetic chain and possibly in a chloroplast respiratory chain. The immediate electron acceptor for the enzyme in this species is believed to be plastoquinone. Couples the redox reaction to proton translocation, and thus conserves the redox energy in a proton gradient. In Cucumis sativus (Cucumber), this protein is NAD(P)H-quinone oxidoreductase subunit 4L, chloroplastic.